A 155-amino-acid chain; its full sequence is V-type proton ATPase 16 kDa proteolipid subunit c (155 aa).

The Lumenal segment spans residues 1–10 (MSEAKSGPEY). A helical membrane pass occupies residues 11 to 33 (ASFFAVMGASAAMVFSALGAAYG). Topologically, residues 34 to 55 (TAKSGTGIAAMSVMRPEMIMKS) are cytoplasmic. The helical transmembrane segment at 56 to 76 (IIPVVMAGIIAIYGLVVAVLI) threads the bilayer. Residues 77 to 92 (ANSLNDGISLYRSFLQ) are Lumenal-facing. Residues 93 to 114 (LGAGLSVGLSGLAAGFAIGIVG) form a helical membrane-spanning segment. Topologically, residues 115-131 (DAGVRGTAQQPRLFVGM) are cytoplasmic. The chain crosses the membrane as a helical span at residues 132 to 152 (ILILIFAEVLGLYGLIVALIL). Over 153–155 (STK) the chain is Lumenal.

Belongs to the V-ATPase proteolipid subunit family. As to quaternary structure, V-ATPase is a heteromultimeric enzyme made up of two complexes: the ATP-hydrolytic V1 complex and the proton translocation V0 complex. The V1 complex consists of three catalytic AB heterodimers that form a heterohexamer, three peripheral stalks each consisting of EG heterodimers, one central rotor including subunits D and F, and the regulatory subunits C and H. The proton translocation complex V0 consists of the proton transport subunit a, a ring of proteolipid subunits c9c'', rotary subunit d, subunits e and f, and the accessory subunits ATP6AP1/Ac45 and ATP6AP2/PRR. Interacts with the V0 complex V-ATPase subunit a4 ATP6V0A4. Interacts with LASS2. Interacts with RNF182; this interaction leads to ubiquitination and degradation via the proteasome pathway. In terms of processing, ubiquitinated by RNF182, leading to its degradation via the ubiquitin-proteasome pathway.

The protein localises to the cytoplasmic vesicle. Its subcellular location is the clathrin-coated vesicle membrane. It is found in the secretory vesicle. It localises to the synaptic vesicle membrane. Proton-conducting pore forming subunit of the V0 complex of vacuolar(H+)-ATPase (V-ATPase), a multisubunit enzyme composed of a peripheral complex (V1) that hydrolyzes ATP and a membrane integral complex (V0) that translocates protons. V-ATPase is responsible for acidifying and maintaining the pH of intracellular compartments and in some cell types, is targeted to the plasma membrane, where it is responsible for acidifying the extracellular environment. The chain is V-type proton ATPase 16 kDa proteolipid subunit c (ATP6V0C) from Ovis aries (Sheep).